Reading from the N-terminus, the 174-residue chain is MIKRSLASLVRVSSVMGRRYMIAAAGGERARFCPAVTNKKNHTVNTFQKRFVESSTDGQVVPQEVLNLPLEKYHEEADDYLDHLLDSLEELSEAHPDCIPDVELSHGVMTLEIPAFGTYVINKQPPNKQIWLASPLSGPNRFDLLNGEWVSLRNGTKLTDILTEEVEKAISKSQ.

The N-terminal 21 residues, 1–21 (MIKRSLASLVRVSSVMGRRYM), are a transit peptide targeting the mitochondrion.

Belongs to the frataxin family. Monomer. Forms a 24-mer complex made up of 8 copies of a trimeric subcomplex. Increments in mitochondrial iron uptake induce stepwise assembly of species ranging from trimers to 24-mers. Interacts with ISU1 with a 1 to 1 stoichiometry; the interaction is direct. Interacts with YHB1, SDH1, SDH2, AIM45 and CIR1. Processed in two steps by mitochondrial processing peptidase (MPP). MPP first cleaves the precursor to intermediate form and subsequently converts the intermediate to mature size protein.

It is found in the mitochondrion matrix. The catalysed reaction is 4 Fe(2+) + O2 + 4 H(+) = 4 Fe(3+) + 2 H2O. Functionally, promotes the biosynthesis of heme as well as the assembly and repair of iron-sulfur clusters by delivering Fe(2+) to proteins involved in these pathways. Plays a role in the protection against iron-catalyzed oxidative stress through its ability to catalyze the oxidation of Fe(2+) to Fe(3+). Can store large amounts of the metal in the form of a ferrihydrite mineral by oligomerization. May be involved in regulation of the mitochondrial electron transport chain. The sequence is that of Frataxin homolog, mitochondrial from Saccharomyces cerevisiae (strain ATCC 204508 / S288c) (Baker's yeast).